Here is a 437-residue protein sequence, read N- to C-terminus: Ribosomal protein uS12 methylthiotransferase RimO (437 aa).

An MTTase N-terminal domain is found at 5–116; it reads PTIAISHLGC…IVEIVERVET (112 aa). The [4Fe-4S] cluster site is built by cysteine 14, cysteine 50, cysteine 79, cysteine 154, cysteine 158, and cysteine 161. The 230-residue stretch at 140–369 folds into the Radical SAM core domain; the sequence is TTSEGVAYLR…MLTQQPISER (230 aa). Residues 372–437 form the TRAM domain; sequence QAYIGQTVDV…DTYDLYGEIV (66 aa).

It belongs to the methylthiotransferase family. RimO subfamily. Requires [4Fe-4S] cluster as cofactor.

It localises to the cytoplasm. The catalysed reaction is L-aspartate(89)-[ribosomal protein uS12]-hydrogen + (sulfur carrier)-SH + AH2 + 2 S-adenosyl-L-methionine = 3-methylsulfanyl-L-aspartate(89)-[ribosomal protein uS12]-hydrogen + (sulfur carrier)-H + 5'-deoxyadenosine + L-methionine + A + S-adenosyl-L-homocysteine + 2 H(+). In terms of biological role, catalyzes the methylthiolation of an aspartic acid residue of ribosomal protein uS12. This is Ribosomal protein uS12 methylthiotransferase RimO from Microcystis aeruginosa (strain NIES-843 / IAM M-2473).